The following is a 109-amino-acid chain: Guanylate cyclase activator 2B (109 aa).

The first 23 residues, 1–23, serve as a signal peptide directing secretion; sequence MKVLALPVAVAAMLLVLAQNTQS. A propeptide spanning residues 24–94 is cleaved from the precursor; the sequence is VYIQYEGFQV…NIFRALRSIS (71 aa). 3 cysteine pairs are disulfide-bonded: Cys65–Cys78, Cys98–Cys106, and Cys101–Cys109.

Belongs to the guanylin family. In terms of tissue distribution, small and large intestine and atria and ventricles of heart. Both uroguanylin and prouroguanylin are found in plasma.

The protein resides in the secreted. In terms of biological role, endogenous activator of intestinal guanylate cyclase. It stimulates this enzyme through the same receptor binding region as the heat-stable enterotoxins. May be a potent physiological regulator of intestinal fluid and electrolyte transport. May be an autocrine/paracrine regulator of intestinal salt and water transport. This Didelphis virginiana (North American opossum) protein is Guanylate cyclase activator 2B (GUCA2B).